A 952-amino-acid polypeptide reads, in one-letter code: Microtubule-associated protein 6 (952 aa).

The tract at residues 1-15 (MAWPCITRACCIARF) is calmodulin-binding. S-palmitoyl cysteine attachment occurs at residues Cys-5, Cys-10, and Cys-11. 2 disordered regions span residues 37 to 457 (TEHP…RAVA) and 486 to 952 (IKPV…EGSP). Residues 41 to 55 (GAPPQPPAPPQPGLA) show a composition bias toward pro residues. Residue Ser-98 is modified to Phosphoserine. Residues 105–117 (ASGSTSGSGPADS) are compositionally biased toward low complexity. Residues 116-139 (DSVMRQDYRAWKVQRPEPSCRPRS) form a mn 1 region. Over residues 119 to 139 (MRQDYRAWKVQRPEPSCRPRS) the composition is skewed to basic and acidic residues. The calmodulin-binding stretch occupies residues 124-138 (RAWKVQRPEPSCRPR). Tyr-141 carries the post-translational modification Phosphotyrosine. Positions 147 to 171 (PFERETQYQKDFRAWPLPRRGDHPW) are enriched in basic and acidic residues. Positions 151–174 (ETQYQKDFRAWPLPRRGDHPWIPK) are mn 2. The segment at 160-174 (AWPLPRRGDHPWIPK) is calmodulin-binding. Ser-185 carries the phosphoserine modification. The calmodulin-binding stretch occupies residues 187 to 201 (PVLGMPKRRPQSQER). Ser-207 carries the post-translational modification Phosphoserine. Low complexity predominate over residues 221-230 (VPAAGKASGA). Residues 222–267 (PAAGKASGADQRDTRRKAGPAWMVTRTEGHEEKPLPPAQSQTQEGG) form a Mc-1 repeat. Residues 222-451 (PAAGKASGAD…HAQGTGPEGG (230 aa)) form a 5 X approximate tandem repeat Mc region. 8 calmodulin-binding regions span residues 235–249 (TRRK…TRTE), 280–294 (DTRR…VTRT), 325–339 (RDTR…MVTR), 373–387 (TRRK…TRTE), 421–435 (RKAG…SEGH), 481–495 (RAWT…IKAK), 532–546 (RRRI…FKES), and 559–573 (PKKT…RKAK). The stretch at 268 to 313 (PAAGKASGADQRDTRRKAGPAWMVTRTEGHEEKPLPPAQSQTQEGG) is one Mc-2 repeat. The stretch at 314 to 359 (PAAGKASGADQRDTRRKAGPAWMVTRTEGHEETPLPPAQSQTQEGG) is one Mc-3 repeat. Residues 360–405 (PAAGKASGADQRDTRRKAGPAWMVTRTEGHEETPLPPAQSQTQEGG) form a Mc-4 repeat. Residues 406–451 (PAAGKASGADERDTRRKAGPAWMVRRSEGHEQTTAAHAQGTGPEGG) form a Mc-5 repeat. The tract at residues 473 to 496 (SSSYRNEFRAWTDIKPVKPIKAKP) is mn 3. Residues 542–551 (PFKESPKVEK) show a composition bias toward basic and acidic residues. Residues 552-567 (PSVQSSKPKKTSTSQK) are compositionally biased toward low complexity. The residue at position 590 (Ser-590) is a Phosphoserine. The span at 595-621 (KPDDKEQSKEMNNKLAEAKESRVKPTS) shows a compositional bias: basic and acidic residues. Ser-681 bears the Phosphoserine mark. Over residues 711-725 (KDQDHMASELLKNKD) the composition is skewed to basic and acidic residues. Ser-736 carries the post-translational modification Phosphoserine. The segment covering 761-775 (APAPTPLKDPGPVIP) has biased composition (pro residues). Basic and acidic residues-rich tracts occupy residues 776-792 (EPEK…RKDQ) and 821-831 (PAKDTGTDLKG). Residues 903-915 (VPAPTKDPGPTAP) show a composition bias toward pro residues. The residue at position 951 (Ser-951) is a Phosphoserine.

Belongs to the STOP family. As to quaternary structure, interacts with calmodulin (via C-terminus); the interaction is dependent on Ca(2+). Interacts (via C-terminus) with TMEM106B (via N-terminus). Interacts with ZDHHC13 (via ANK repeats). Interacts with ZDHHC17 (via ANK repeats). Post-translationally, palmitoylated. Probably depalmitoylated by ABHD17A, ABHD17B and ABHD17C. During neuronal polarization, palmitoylation and depalmitoylation cycles regulate MAP6 shuttling between secretory vesicles and microtubules, and its polarized distribution in the axon. In terms of tissue distribution, isoform 1 is specifically expressed in adult brain. Isoform 2 is predominantly expressed in embryonic brain; expression persists at low levels in the adult brain.

Its subcellular location is the cytoplasm. The protein resides in the cytoskeleton. It localises to the golgi apparatus. The protein localises to the cell projection. It is found in the axon. Its subcellular location is the dendrite. The protein resides in the cytoplasmic vesicle. It localises to the secretory vesicle membrane. Involved in microtubule stabilization in many cell types, including neuronal cells. Specifically has microtubule cold stabilizing activity. Involved in dendrite morphogenesis and maintenance by regulating lysosomal trafficking via its interaction with TMEM106B. Regulates KIF5A-mediated axonal cargo transport. Regulates axonal growth during neuron polarization. This chain is Microtubule-associated protein 6 (Map6), found in Rattus norvegicus (Rat).